A 186-amino-acid chain; its full sequence is Peptidyl-tRNA hydrolase (186 aa).

Tyr-16 contributes to the tRNA binding site. The active-site Proton acceptor is the His-21. 3 residues coordinate tRNA: Tyr-66, Asn-68, and Asn-114.

The protein belongs to the PTH family. Monomer.

The protein localises to the cytoplasm. It carries out the reaction an N-acyl-L-alpha-aminoacyl-tRNA + H2O = an N-acyl-L-amino acid + a tRNA + H(+). Hydrolyzes ribosome-free peptidyl-tRNAs (with 1 or more amino acids incorporated), which drop off the ribosome during protein synthesis, or as a result of ribosome stalling. Functionally, catalyzes the release of premature peptidyl moieties from peptidyl-tRNA molecules trapped in stalled 50S ribosomal subunits, and thus maintains levels of free tRNAs and 50S ribosomes. The polypeptide is Peptidyl-tRNA hydrolase (Ureaplasma parvum serovar 3 (strain ATCC 700970)).